Here is a 475-residue protein sequence, read N- to C-terminus: 23S rRNA (uracil(1939)-C(5))-methyltransferase RlmD (475 aa).

The 76-residue stretch at 1 to 76 folds into the TRAM domain; sequence MHRGDKPVNI…SRFSKAKVRE (76 aa). Residues C89, C95, C98, and C178 each coordinate [4Fe-4S] cluster. Q299, F328, N333, E349, D377, and D398 together coordinate S-adenosyl-L-methionine. C431 acts as the Nucleophile in catalysis.

It belongs to the class I-like SAM-binding methyltransferase superfamily. RNA M5U methyltransferase family. RlmD subfamily.

The catalysed reaction is uridine(1939) in 23S rRNA + S-adenosyl-L-methionine = 5-methyluridine(1939) in 23S rRNA + S-adenosyl-L-homocysteine + H(+). Functionally, catalyzes the formation of 5-methyl-uridine at position 1939 (m5U1939) in 23S rRNA. The chain is 23S rRNA (uracil(1939)-C(5))-methyltransferase RlmD from Polynucleobacter necessarius subsp. necessarius (strain STIR1).